The following is a 170-amino-acid chain: Anaphase-promoting complex subunit SWM1 (170 aa).

Composition is skewed to basic and acidic residues over residues 48–67 (NTRT…RNSN) and 132–141 (GANEPRKETI). Disordered stretches follow at residues 48-81 (NTRT…MTSE) and 122-141 (LNGG…KETI).

Belongs to the APC13 family. The APC/C is composed of at least 13 subunits that stay tightly associated throughout the cell cycle: APC1, APC2, APC4, APC5, APC9, APC11, CDC16, CDC23, CDC26, CDC27, DOC1, MND2 and SWM1. SWM1 interacts directly with CDC23 and APC5, and is required to tether APC9, CDC16, CDC26 and CDC27 to the complex.

Its pathway is protein modification; protein ubiquitination. In terms of biological role, component of the anaphase promoting complex/cyclosome (APC/C), a cell cycle-regulated E3 ubiquitin-protein ligase complex that controls progression through mitosis and the G1 phase of the cell cycle. The APC/C is thought to confer substrate specificity and, in the presence of ubiquitin-conjugating E2 enzymes, it catalyzes the formation of protein-ubiquitin conjugates that are subsequently degraded by the 26S proteasome. In early mitosis, the APC/C is activated by CDC20 and targets securin PDS1, the B-type cyclin CLB5, and other anaphase inhibitory proteins for proteolysis, thereby triggering the separation of sister chromatids at the metaphase-to-anaphase transition. In late mitosis and in G1, degradation of CLB5 allows activation of the APC/C by CDH1, which is needed to destroy CDC20 and the B-type cyclin CLB2 to allow exit from mitosis and creating the low CDK state necessary for cytokinesis and for reforming prereplicative complexes in G1 prior to another round of replication. SWM1 is required for APC/C activity in meiosis. This chain is Anaphase-promoting complex subunit SWM1 (SWM1), found in Saccharomyces cerevisiae (strain ATCC 204508 / S288c) (Baker's yeast).